Reading from the N-terminus, the 342-residue chain is Phosphate acyltransferase (342 aa).

This sequence belongs to the PlsX family. As to quaternary structure, homodimer. Probably interacts with PlsY.

Its subcellular location is the cytoplasm. It catalyses the reaction a fatty acyl-[ACP] + phosphate = an acyl phosphate + holo-[ACP]. It participates in lipid metabolism; phospholipid metabolism. Functionally, catalyzes the reversible formation of acyl-phosphate (acyl-PO(4)) from acyl-[acyl-carrier-protein] (acyl-ACP). This enzyme utilizes acyl-ACP as fatty acyl donor, but not acyl-CoA. In Legionella pneumophila (strain Corby), this protein is Phosphate acyltransferase.